Consider the following 221-residue polypeptide: Large ribosomal subunit protein uL16A (221 aa).

It belongs to the universal ribosomal protein uL16 family. As to quaternary structure, component of the large ribosomal subunit (LSU). Mature yeast ribosomes consist of a small (40S) and a large (60S) subunit. The 40S small subunit contains 1 molecule of ribosomal RNA (18S rRNA) and at least 33 different proteins. The large 60S subunit contains 3 rRNA molecules (25S, 5.8S and 5S rRNA) and at least 46 different proteins.

Its subcellular location is the cytoplasm. Its function is as follows. Component of the ribosome, a large ribonucleoprotein complex responsible for the synthesis of proteins in the cell. The small ribosomal subunit (SSU) binds messenger RNAs (mRNAs) and translates the encoded message by selecting cognate aminoacyl-transfer RNA (tRNA) molecules. The large subunit (LSU) contains the ribosomal catalytic site termed the peptidyl transferase center (PTC), which catalyzes the formation of peptide bonds, thereby polymerizing the amino acids delivered by tRNAs into a polypeptide chain. The nascent polypeptides leave the ribosome through a tunnel in the LSU and interact with protein factors that function in enzymatic processing, targeting, and the membrane insertion of nascent chains at the exit of the ribosomal tunnel. The protein is Large ribosomal subunit protein uL16A (rpl1001) of Schizosaccharomyces pombe (strain 972 / ATCC 24843) (Fission yeast).